The following is a 1053-amino-acid chain: DIS3-like exonuclease 1 (1053 aa).

Residues 236 to 310 (AGIKSGRYIQ…KSEWKGRTAA (75 aa)) enclose the CSD1 domain. The interval 306-332 (GRTAALGENDSDDKASGESPSEPMPTG) is disordered. The CSD2 domain maps to 365-431 (ILVTPWDYRI…GEIATILVEN (67 aa)). The RNB domain maps to 465 to 816 (RKDLRTTHLV…VHRLLMAAIS (352 aa)). Ser989 bears the Phosphoserine mark.

Belongs to the RNR ribonuclease family. In terms of assembly, component of the RNA exosome complex. The catalytically inactive RNA exosome core (Exo-9) complex is believed to associate with catalytic subunits EXOSC10, and DIS3 or DIS3L in cytoplasmic- and nuclear-specific RNA exosome complex forms. Mg(2+) serves as cofactor.

It localises to the cytoplasm. The catalysed reaction is Exonucleolytic cleavage in the 3'- to 5'-direction to yield nucleoside 5'-phosphates.. Catalytic component of the RNA exosome complex which has 3'-&gt;5' exoribonuclease activity and participates in a multitude of cellular RNA processing and degradation events. In the cytoplasm, the RNA exosome complex is involved in general mRNA turnover and specifically degrades inherently unstable mRNAs containing AU-rich elements (AREs) within their 3' untranslated regions, and in RNA surveillance pathways, preventing translation of aberrant mRNAs. It seems to be involved in degradation of histone mRNA. The protein is DIS3-like exonuclease 1 (Dis3l) of Mus musculus (Mouse).